The primary structure comprises 389 residues: Pyruvate dehydrogenase E1 component subunit alpha-1, mitochondrial (389 aa).

The transit peptide at 1-32 (MALSRLSSRSNIITRPFSAAFSRLISTDTTPI) directs the protein to the mitochondrion. Pyruvate contacts are provided by histidine 90, tyrosine 116, arginine 117, glycine 165, valine 167, aspartate 196, glycine 197, alanine 198, asparagine 225, and tyrosine 227. Residues tyrosine 116, arginine 117, glycine 165, valine 167, aspartate 196, glycine 197, alanine 198, and asparagine 225 each coordinate thiamine diphosphate. Aspartate 196 is a binding site for Mg(2+). Mg(2+)-binding residues include asparagine 225 and tyrosine 227. Histidine 291 serves as a coordination point for thiamine diphosphate.

Tetramer of 2 alpha and 2 beta subunits. The cofactor is thiamine diphosphate. Mg(2+) is required as a cofactor. Expressed in roots, rosettes and flowers.

It localises to the mitochondrion matrix. It carries out the reaction N(6)-[(R)-lipoyl]-L-lysyl-[protein] + pyruvate + H(+) = N(6)-[(R)-S(8)-acetyldihydrolipoyl]-L-lysyl-[protein] + CO2. Its activity is regulated as follows. E1 activity is regulated by phosphorylation (inactivation) and dephosphorylation (activation) of the alpha subunit. In terms of biological role, the pyruvate dehydrogenase complex catalyzes the overall conversion of pyruvate to acetyl-CoA and CO(2). It contains multiple copies of three enzymatic components: pyruvate dehydrogenase (E1), dihydrolipoamide acetyltransferase (E2) and lipoamide dehydrogenase (E3). The polypeptide is Pyruvate dehydrogenase E1 component subunit alpha-1, mitochondrial (E1 ALPHA) (Arabidopsis thaliana (Mouse-ear cress)).